The primary structure comprises 295 residues: Large ribosomal subunit protein uL18 (295 aa).

Positions 251–261 (PTPKKKTDFAG) are enriched in basic and acidic residues. Residues 251 to 295 (PTPKKKTDFAGKTKRWNRKKMTFSQRRDRVKQKKASFLRAKQQEG) are disordered. Basic residues predominate over residues 262-271 (KTKRWNRKKM).

This sequence belongs to the universal ribosomal protein uL18 family. As to quaternary structure, component of the large ribosomal subunit (LSU).

The protein localises to the cytoplasm. It localises to the nucleus. In terms of biological role, component of the ribosome, a large ribonucleoprotein complex responsible for the synthesis of proteins in the cell. The small ribosomal subunit (SSU) binds messenger RNAs (mRNAs) and translates the encoded message by selecting cognate aminoacyl-transfer RNA (tRNA) molecules. The large subunit (LSU) contains the ribosomal catalytic site termed the peptidyl transferase center (PTC), which catalyzes the formation of peptide bonds, thereby polymerizing the amino acids delivered by tRNAs into a polypeptide chain. The nascent polypeptides leave the ribosome through a tunnel in the LSU and interact with protein factors that function in enzymatic processing, targeting, and the membrane insertion of nascent chains at the exit of the ribosomal tunnel. The sequence is that of Large ribosomal subunit protein uL18 (RPL5) from Styela clava (Sea squirt).